Here is a 714-residue protein sequence, read N- to C-terminus: Sodium-dependent acetylcholine transporter (714 aa).

Residues 1-21 (MSVSSNDPEQRNGRGMASGNN) form a disordered region. Topologically, residues 1 to 74 (MSVSSNDPEQ…GNWSNKSDYL (74 aa)) are cytoplasmic. 3 helical membrane passes run 75-95 (LAVI…FLVF), 100-120 (AAFL…MFFM), and 152-172 (ISGF…FYLI). Over 173-257 (NSFSFSIPWS…LSKGVDDFGT (85 aa)) the chain is Extracellular. N192, N205, N211, and N222 each carry an N-linked (GlcNAc...) asparagine glycan. 9 helical membrane-spanning segments follow: residues 258-278 (LNWY…LCLF), 287-307 (VVYV…TRLL), 336-356 (AAVQ…TIAS), 368-388 (IWLV…LTFS), 422-442 (AGVS…LLVV), 476-496 (VCAL…LFWM), 502-522 (FVLT…INWV), 548-568 (ILFK…LWLD), and 584-604 (ILTA…VGIW). Residues 605 to 714 (QFCIAKGTIT…IPKFERETAI (110 aa)) are Cytoplasmic-facing.

Belongs to the sodium:neurotransmitter symporter (SNF) (TC 2.A.22) family. In terms of assembly, interacts with stn-1; part of the DGC. In terms of tissue distribution, body wall, and vulval and enteric muscles.

The protein localises to the cell membrane. It localises to the postsynaptic cell membrane. In terms of biological role, mediates sodium-dependent uptake of acetylcholine at neuromuscular junctions during periods of increased synaptic activity, may also prevent spillover to adjacent synaptic sites. Not involved in the uptake of other neurotransmitters (GABA, glycine, proline and glutamate) and there was also no inhibition of uptake by adding an excess of other candidate substrates (GABA, glycine, taurine, creatine, proline, alanine, carnitine, glutamate and betaine). Required for muscle integrity; altered transport of acetylcholine due to loss of dystrophin-glycoprotein complex (DGC) function results in muscle degeneration. This Caenorhabditis elegans protein is Sodium-dependent acetylcholine transporter.